The following is a 975-amino-acid chain: Protein bicaudal D homolog 1 (975 aa).

Coiled coils occupy residues 1-265 (MAAE…HISI) and 319-496 (SELN…IANE). Disordered regions lie at residues 383–403 (SSKELKAELDGEKGRDSGEEA), 545–616 (RSGS…LDTS), 800–824 (DHEQSRRSKGKLGKSKIGSPKVSGE), 836–877 (LLHS…ASYL), and 922–975 (DCQQ…PPHP). 2 stretches are compositionally biased toward basic and acidic residues: residues 385-403 (KELKAELDGEKGRDSGEEA) and 581-590 (VAKESTEASK). Positions 592 to 602 (PSPTKTPTISP) are enriched in polar residues. A coiled-coil region spans residues 663–803 (IDKDKEALME…LEDLEFDHEQ (141 aa)). Residues 663-803 (IDKDKEALME…LEDLEFDHEQ (141 aa)) are interaction with RAB6A. A compositionally biased stretch (polar residues) spans 840 to 877 (QGPQTPNIRVSSGTQRKRQFSPSLCDQSRPRTSGASYL).

The protein belongs to the BicD family. Interacts with RAB6A. Interacts (via C-terminus) with RAB6B (GTP-bound); the interaction is direct. Interacts with CLIP-115 and KIFC2. In terms of assembly, (Microbial infection) Interacts with human cytomegalovirus/HHV-5 protein UL32. Expressed in the brain, heart and skeletal muscle.

The protein localises to the golgi apparatus. Functionally, regulates coat complex coatomer protein I (COPI)-independent Golgi-endoplasmic reticulum transport by recruiting the dynein-dynactin motor complex. The protein is Protein bicaudal D homolog 1 (BICD1) of Homo sapiens (Human).